An 871-amino-acid polypeptide reads, in one-letter code: Probable LRR receptor-like serine/threonine-protein kinase At1g51810 (871 aa).

The first 20 residues, 1 to 20, serve as a signal peptide directing secretion; the sequence is MERHCLFFVIFSLILHLVQA. Residues 21 to 512 lie on the Extracellular side of the membrane; the sequence is QDPIGFINLD…GRQIKSMTIP (492 aa). N-linked (GlcNAc...) asparagine glycans are attached at residues Asn93, Asn179, Asn229, Asn283, Asn295, Asn396, Asn410, Asn439, Asn458, Asn463, and Asn489. 3 LRR repeats span residues 405–426, 429–449, and 453–474; these read IITSLNLSSSGLTGIIVLTIQN, NLQELDLSNNNLSGGVPEFLA, and SLLVINLSGNNLSGVVPQKLIE. A helical membrane pass occupies residues 513–533; sequence IVASIGSVVAFTVALMIFCVV. Topologically, residues 534–871 are cytoplasmic; it reads RKNNPSNDEA…FGTEVAPMAR (338 aa). Phosphothreonine is present on Thr568. In terms of domain architecture, Protein kinase spans 577–850; the sequence is NNFQKILGKG…QVVFELKECL (274 aa). ATP-binding positions include 583–591 and Lys605; that span reads LGKGGFGIV. Residue Tyr650 is modified to Phosphotyrosine. The Proton acceptor role is filled by Asp702. At Ser736 the chain carries Phosphoserine. Thr737 and Thr742 each carry phosphothreonine. A Phosphotyrosine modification is found at Tyr750.

Belongs to the protein kinase superfamily. Ser/Thr protein kinase family.

It localises to the membrane. It carries out the reaction L-seryl-[protein] + ATP = O-phospho-L-seryl-[protein] + ADP + H(+). The enzyme catalyses L-threonyl-[protein] + ATP = O-phospho-L-threonyl-[protein] + ADP + H(+). The polypeptide is Probable LRR receptor-like serine/threonine-protein kinase At1g51810 (Arabidopsis thaliana (Mouse-ear cress)).